Reading from the N-terminus, the 209-residue chain is dTTP/UTP pyrophosphatase (209 aa).

The active-site Proton acceptor is the Asp79.

Belongs to the Maf family. YhdE subfamily. Requires a divalent metal cation as cofactor.

It localises to the cytoplasm. The catalysed reaction is dTTP + H2O = dTMP + diphosphate + H(+). It carries out the reaction UTP + H2O = UMP + diphosphate + H(+). In terms of biological role, nucleoside triphosphate pyrophosphatase that hydrolyzes dTTP and UTP. May have a dual role in cell division arrest and in preventing the incorporation of modified nucleotides into cellular nucleic acids. This chain is dTTP/UTP pyrophosphatase, found in Bradyrhizobium diazoefficiens (strain JCM 10833 / BCRC 13528 / IAM 13628 / NBRC 14792 / USDA 110).